The primary structure comprises 579 residues: Nuclear hormone receptor family member nhr-47 (579 aa).

Positions 8–83 (GTLCAVCDDI…VGMDKNSIQN (76 aa)) form a DNA-binding region, nuclear receptor. 2 NR C4-type zinc fingers span residues 11 to 31 (CAVC…CNGC) and 47 to 71 (CQGN…LQKC). Residues 87–128 (RIGYTKRKRRHDDNDMEGGVHHSEHIRDGSSGSPQMNDESPE) form a disordered region. The segment covering 104-114 (GGVHHSEHIRD) has biased composition (basic and acidic residues). The NR LBD domain occupies 164–553 (ADLHSYATLE…SLVKETSLGP (390 aa)).

Belongs to the nuclear hormone receptor family.

It localises to the nucleus. Its function is as follows. Orphan nuclear receptor. In Caenorhabditis elegans, this protein is Nuclear hormone receptor family member nhr-47 (nhr-47).